The chain runs to 232 residues: Large ribosomal subunit protein uL1 (232 aa).

It belongs to the universal ribosomal protein uL1 family. As to quaternary structure, part of the 50S ribosomal subunit.

Binds directly to 23S rRNA. The L1 stalk is quite mobile in the ribosome, and is involved in E site tRNA release. Its function is as follows. Protein L1 is also a translational repressor protein, it controls the translation of the L11 operon by binding to its mRNA. This is Large ribosomal subunit protein uL1 from Rhizorhabdus wittichii (strain DSM 6014 / CCUG 31198 / JCM 15750 / NBRC 105917 / EY 4224 / RW1) (Sphingomonas wittichii).